The sequence spans 92 residues: Large ribosomal subunit protein bL25 (92 aa).

This sequence belongs to the bacterial ribosomal protein bL25 family. Part of the 50S ribosomal subunit; part of the 5S rRNA/L5/L18/L25 subcomplex. Contacts the 5S rRNA. Binds to the 5S rRNA independently of L5 and L18.

This is one of the proteins that binds to the 5S RNA in the ribosome where it forms part of the central protuberance. The chain is Large ribosomal subunit protein bL25 from Vibrio parahaemolyticus serotype O3:K6 (strain RIMD 2210633).